The primary structure comprises 432 residues: Adenylosuccinate synthetase (432 aa).

GTP is bound by residues 13 to 19 and 41 to 43; these read GDEGKGK and GHT. Aspartate 14 serves as the catalytic Proton acceptor. 2 residues coordinate Mg(2+): aspartate 14 and glycine 41. Residues 14 to 17, 39 to 42, threonine 130, arginine 144, glutamine 225, threonine 240, and arginine 304 each bind IMP; these read DEGK and NAGH. Histidine 42 functions as the Proton donor in the catalytic mechanism. 300–306 lines the substrate pocket; that stretch reads AVTGRPR. GTP contacts are provided by residues arginine 306, 332-334, and 415-417; these read KLD and STG.

The protein belongs to the adenylosuccinate synthetase family. As to quaternary structure, homodimer. Requires Mg(2+) as cofactor.

It localises to the cytoplasm. The enzyme catalyses IMP + L-aspartate + GTP = N(6)-(1,2-dicarboxyethyl)-AMP + GDP + phosphate + 2 H(+). Its pathway is purine metabolism; AMP biosynthesis via de novo pathway; AMP from IMP: step 1/2. Its function is as follows. Plays an important role in the de novo pathway of purine nucleotide biosynthesis. Catalyzes the first committed step in the biosynthesis of AMP from IMP. This is Adenylosuccinate synthetase from Haemophilus influenzae (strain 86-028NP).